The primary structure comprises 162 residues: NADPH-dependent 7-cyano-7-deazaguanine reductase (162 aa).

The Thioimide intermediate role is filled by C53. D60 serves as the catalytic Proton donor. Residues 75–77 (VES) and 94–95 (HE) each bind substrate.

It belongs to the GTP cyclohydrolase I family. QueF type 1 subfamily.

Its subcellular location is the cytoplasm. The catalysed reaction is 7-aminomethyl-7-carbaguanine + 2 NADP(+) = 7-cyano-7-deazaguanine + 2 NADPH + 3 H(+). It functions in the pathway tRNA modification; tRNA-queuosine biosynthesis. Catalyzes the NADPH-dependent reduction of 7-cyano-7-deazaguanine (preQ0) to 7-aminomethyl-7-deazaguanine (preQ1). In Streptococcus mutans serotype c (strain ATCC 700610 / UA159), this protein is NADPH-dependent 7-cyano-7-deazaguanine reductase.